Reading from the N-terminus, the 355-residue chain is Methyltransferase FUS9 (355 aa).

Residues Y18, N63, D86, S123, and F124 each coordinate S-adenosyl-L-homocysteine. F231 serves as a coordination point for Mg(2+).

This sequence belongs to the methyltransferase superfamily. Type-7 methyltransferase family. Requires Mg(2+) as cofactor.

Its pathway is mycotoxin biosynthesis. Its function is as follows. Methyltransferase; part of the gene cluster that mediates the biosynthesis of the mycotoxin fusarin C. Within the cluster, FUS1, FUS2, FUS8 and FUS9 are sufficient for fusarin production. The roles of the other FUS members are yet undetermined. The fusarin C synthetase FUS1 is responsible for the condensation of one acetyl-coenzyme A (CoA) unit with six malonyl-CoA units and the amide linkage of the arising heptaketide and homoserine, subsequently releasing the first intermediate, prefusarin, as an alcohol with an open ring structure. The cytochrome P450 monooxygenase FUS8 participates in multiple oxidation processes at carbon C-20 and is able to use the FUS1 product as substrate, resulting in formation of 20-hydroxy-prefusarin. This reaction seems to be essential before the 2-pyrrolidone ring closure can be catalyzed by FUS2, generating 20-hydroxy-fusarin. FUS8 is able to further oxidizes carbon C-20 after ring closure, resulting in the formation of carboxy-fusarin C. As the last step, FUS9 methylates the hydroxyl group at C-21 to generate fusarin C. Fusarin C can then rearrange to epi-fusarin C, the (z)-isomers, and fusarin A and fusarin D. The polypeptide is Methyltransferase FUS9 (Gibberella moniliformis (strain M3125 / FGSC 7600) (Maize ear and stalk rot fungus)).